The chain runs to 372 residues: Alanine racemase (372 aa).

Lys-41 functions as the Proton acceptor; specific for D-alanine in the catalytic mechanism. The residue at position 41 (Lys-41) is an N6-(pyridoxal phosphate)lysine. A substrate-binding site is contributed by Arg-139. Catalysis depends on Tyr-268, which acts as the Proton acceptor; specific for L-alanine. Residue Met-316 participates in substrate binding.

This sequence belongs to the alanine racemase family. The cofactor is pyridoxal 5'-phosphate.

It catalyses the reaction L-alanine = D-alanine. Its pathway is amino-acid biosynthesis; D-alanine biosynthesis; D-alanine from L-alanine: step 1/1. Catalyzes the interconversion of L-alanine and D-alanine. May also act on other amino acids. This is Alanine racemase (alr) from Borreliella burgdorferi (strain ATCC 35210 / DSM 4680 / CIP 102532 / B31) (Borrelia burgdorferi).